Reading from the N-terminus, the 175-residue chain is Endoribonuclease YbeY (175 aa).

Positions 129, 133, and 139 each coordinate Zn(2+).

It belongs to the endoribonuclease YbeY family. Zn(2+) is required as a cofactor.

It is found in the cytoplasm. Its function is as follows. Single strand-specific metallo-endoribonuclease involved in late-stage 70S ribosome quality control and in maturation of the 3' terminus of the 16S rRNA. The polypeptide is Endoribonuclease YbeY (Lactobacillus johnsonii (strain CNCM I-12250 / La1 / NCC 533)).